Reading from the N-terminus, the 279-residue chain is Movement protein (279 aa).

Positions 256–266 (PPIAIGSPSAS) are enriched in low complexity. A disordered region spans residues 256–279 (PPIAIGSPSASRNNSFRSQVVNGL). The span at 267–279 (RNNSFRSQVVNGL) shows a compositional bias: polar residues.

This sequence belongs to the cucumovirus movement protein family.

It is found in the host cell junction. Its subcellular location is the host plasmodesma. Its function is as follows. Transports viral genome to neighboring plant cells directly through plasmosdesmata, without any budding. The movement protein allows efficient cell to cell propagation, by bypassing the host cell wall barrier. Acts by forming a tubular structure at the host plasmodesmata, enlarging it enough to allow free passage of virion capsids. In Cucumis sativus (Cucumber), this protein is Movement protein.